Consider the following 404-residue polypeptide: Aspartokinase 1 (404 aa).

7-10 serves as a coordination point for ATP; that stretch reads KFGG. Position 25–30 (25–30) interacts with substrate; sequence HIKEAI. Serine 41 serves as a coordination point for ATP. Residues 52 to 54, glutamate 79, 130 to 131, 155 to 158, and serine 158 each bind substrate; these read TDS, LA, and RGGS. ATP contacts are provided by residues 178–179 and 184–189; these read TD and MTADPR. Substrate-binding positions include 299–301, 355–356, 369–370, and 376–377; these read SVD, VT, PI, and SH. In terms of domain architecture, ACT spans 344–404; it reads AVGAGIMGVP…ALHEVFELSK (61 aa).

This sequence belongs to the aspartokinase family. Tetramer consisting of 2 isoforms Alpha (catalytic) and 2 isoforms Beta (function not known).

It carries out the reaction L-aspartate + ATP = 4-phospho-L-aspartate + ADP. It functions in the pathway amino-acid biosynthesis; L-lysine biosynthesis via DAP pathway; (S)-tetrahydrodipicolinate from L-aspartate: step 1/4. The protein operates within amino-acid biosynthesis; L-methionine biosynthesis via de novo pathway; L-homoserine from L-aspartate: step 1/3. Its pathway is amino-acid biosynthesis; L-threonine biosynthesis; L-threonine from L-aspartate: step 1/5. With respect to regulation, diaminopimelate-sensitive. In terms of biological role, catalyzes the phosphorylation of the beta-carboxyl group of aspartic acid with ATP to yield 4-phospho-L-aspartate, which is involved in the branched biosynthetic pathway leading to the biosynthesis of amino acids threonine, isoleucine and methionine. This is Aspartokinase 1 (dapG) from Bacillus subtilis (strain 168).